Reading from the N-terminus, the 243-residue chain is MNETDIEGARVVVAEACRVAAARGLMEGILGHISFRVSPDLLLIRCRSADDTGVAYTRPSDIRLVRFDGTAGAPGELDNGYQVPKELPVHVESMRASPDIRAVAHLHPPSIVAADLAGISLRPIYGAYDIPGAVLARGGVPVYRRAVLIHSTQLGKEMVTAMGDRPVVICRGHGITSVASSVQQSVLQAASLEELARMSLAVVSAGGTLVDIDDADWEDLPDLGANFNTGAVWRHEVARAATV.

Catalysis depends on glutamate 86, which acts as the Proton donor/acceptor. 4 residues coordinate a divalent metal cation: glutamate 86, histidine 105, histidine 107, and histidine 173.

The protein belongs to the aldolase class II family. A divalent metal cation serves as cofactor.

The enzyme catalyses 3,4-dihydroxyphthalate + H(+) = 3,4-dihydroxybenzoate + CO2. It functions in the pathway xenobiotic degradation; phthalate degradation. Catalyzes the decarboxylation of 3,4-dihydroxyphthalate to protocatechuate (3,4-dihydroxybenzoate) during phthalate metabolism. In Rhodococcus jostii (strain RHA1), this protein is 3,4-dihydroxyphthalate decarboxylase.